The primary structure comprises 358 residues: Gibberellin 2-beta-dioxygenase 6 (358 aa).

The 102-residue stretch at 207–308 (DETTCFLRLN…RLSVAYFLCP (102 aa)) folds into the Fe2OG dioxygenase domain. Residue Y218 participates in 2-oxoglutarate binding. Residues H233, D235, and H289 each coordinate Fe cation. Residues R299 and S301 each contribute to the 2-oxoglutarate site.

Belongs to the iron/ascorbate-dependent oxidoreductase family. GA2OX subfamily. Requires L-ascorbate as cofactor. Fe(2+) serves as cofactor. As to expression, expressed in panicles. Expressed at low levels in young shoots, leaf blades and elongating internodes.

It localises to the cytoplasm. The protein localises to the nucleus. The enzyme catalyses gibberellin A1 + 2-oxoglutarate + O2 = gibberellin A8 + succinate + CO2. Its function is as follows. Catalyzes the 2-beta-hydroxylation of several biologically active gibberellins, leading to the homeostatic regulation of their endogenous level. Catabolism of gibberellins (GAs) plays a central role in plant development. In vitro, converts GA12 and GA53 to the corresponding 2-beta-hydroxylated products GA110 and GA97, respectively. This Oryza sativa subsp. japonica (Rice) protein is Gibberellin 2-beta-dioxygenase 6.